Here is a 548-residue protein sequence, read N- to C-terminus: MDSQRNLLVIALLFVSFMIWQAWEQDKNPQPQAQQTTQTTTTAAGSAADQGVPASGQGKLISVKTDVLDLTINTRGGDVEQALLPAYPKELNSTQPFQLLETSSQFIYQAQSGLTGRDGPDNPANGPRPLYNVEKDAYVLAEGQNELQVPMTYTDAAGNTFTKTFVLKRGDYAVNVNYNVQNAGEKPLEISTFGQLKQSITLPPHLDTGSSNFALHTFRGAAYSTPDEKYEKYKFDTIADNENLNISSKGGWVAMLQQYFATAWIPHNDGTNNFYTANLGNGIAAIGYKSQPVLVQPGQTGAMNSTLWVGPEIQDKMAAVAPHLDLTVDYGWLWFISQPLFKLLKWIHSFVGNWGFSIIIITFIVRGIMYPLTKAQYTSMAKMRMLQPKIQAMRERLGDDKQRISQEMMALYKAEKVNPLGGCFPLLIQMPIFLALYYMLMGSVELRQAPFALWIHDLSAQDPYYILPILMGVTMFFIQKMSPTTVTDPMQQKIMTFMPVIFTVFFLWFPSGLVLYYIVSNLVTIIQQQLIYRGLEKRGLHSREKKKS.

A helical membrane pass occupies residues 6-26; the sequence is NLLVIALLFVSFMIWQAWEQD. The segment at 28–55 is disordered; that stretch reads NPQPQAQQTTQTTTTAAGSAADQGVPAS. The span at 30–50 shows a compositional bias: low complexity; the sequence is QPQAQQTTQTTTTAAGSAADQ. The next 4 helical transmembrane spans lie at 350 to 370, 420 to 440, 458 to 478, and 499 to 519; these read FVGN…GIMY, LGGC…YYML, LSAQ…MFFI, and PVIF…YYIV.

The protein belongs to the OXA1/ALB3/YidC family. Type 1 subfamily. In terms of assembly, interacts with the Sec translocase complex via SecD. Specifically interacts with transmembrane segments of nascent integral membrane proteins during membrane integration.

It is found in the cell inner membrane. In terms of biological role, required for the insertion and/or proper folding and/or complex formation of integral membrane proteins into the membrane. Involved in integration of membrane proteins that insert both dependently and independently of the Sec translocase complex, as well as at least some lipoproteins. Aids folding of multispanning membrane proteins. The protein is Membrane protein insertase YidC of Escherichia coli O139:H28 (strain E24377A / ETEC).